We begin with the raw amino-acid sequence, 470 residues long: UDP-N-acetylmuramoylalanine--D-glutamate ligase (470 aa).

120-126 provides a ligand contact to ATP; it reads GSNGKTT.

The protein belongs to the MurCDEF family.

Its subcellular location is the cytoplasm. The catalysed reaction is UDP-N-acetyl-alpha-D-muramoyl-L-alanine + D-glutamate + ATP = UDP-N-acetyl-alpha-D-muramoyl-L-alanyl-D-glutamate + ADP + phosphate + H(+). It functions in the pathway cell wall biogenesis; peptidoglycan biosynthesis. Cell wall formation. Catalyzes the addition of glutamate to the nucleotide precursor UDP-N-acetylmuramoyl-L-alanine (UMA). In Nitrosomonas eutropha (strain DSM 101675 / C91 / Nm57), this protein is UDP-N-acetylmuramoylalanine--D-glutamate ligase.